The sequence spans 541 residues: EH domain-containing protein 4 (541 aa).

At Met-1 the chain carries N-acetylmethionine. The Dynamin-type G domain maps to 58–289; sequence FENKPMILLV…DLFRDIQSLP (232 aa). The segment at 68 to 75 is G1 motif; the sequence is GQYSTGKT. 68-75 is an ATP binding site; that stretch reads GQYSTGKT. A G2 motif region spans residues 94 to 95; sequence EP. A G3 motif region spans residues 156–159; the sequence is DSPG. Ser-162 bears the Phosphoserine mark. A G4 motif region spans residues 222–225; it reads NKAD. Position 223 (Lys-223) interacts with ATP. A region of interest (G5 motif) is located at residue Val-246. Trp-261 provides a ligand contact to ATP. The EH domain maps to 447 to 535; sequence DKPVYDELFY…PHLVPPSHRK (89 aa). Tyr-451 carries the phosphotyrosine modification. Ser-459 is subject to Phosphoserine. One can recognise an EF-hand domain in the interval 479-514; that stretch reads LPNSVLGKIWKLADCDCDGMLDEEEFALAKHLIKIK. The Ca(2+) site is built by Asp-492, Asp-494, Asp-496, Met-498, and Glu-503.

It belongs to the TRAFAC class dynamin-like GTPase superfamily. Dynamin/Fzo/YdjA family. EHD subfamily. As to quaternary structure, homooligomer, and heterooligomer with EHD1, EHD2 and EHD3. Forms a complex with EHD4 and MICALL1; the complex controls CDH5 trafficking and coordinates angiogenesis. Highly expressed in pancreas and heart.

It localises to the early endosome membrane. The protein localises to the recycling endosome membrane. It is found in the cell membrane. Its subcellular location is the cell junction. The protein resides in the adherens junction. Functionally, ATP- and membrane-binding protein that probably controls membrane reorganization/tubulation upon ATP hydrolysis. Plays a role in early endosomal transport. During sprouting angiogenesis, in complex with PACSIN2 and MICALL1, forms recycling endosome-like tubular structure at asymmetric adherens junctions to control CDH5 trafficking. The protein is EH domain-containing protein 4 of Homo sapiens (Human).